The following is a 152-amino-acid chain: ATP synthase epsilon chain 2 (152 aa).

The protein belongs to the ATPase epsilon chain family. As to quaternary structure, F-type ATPases have 2 components, CF(1) - the catalytic core - and CF(0) - the membrane proton channel. CF(1) has five subunits: alpha(3), beta(3), gamma(1), delta(1), epsilon(1). CF(0) has three main subunits: a, b and c.

The protein localises to the cell inner membrane. Functionally, produces ATP from ADP in the presence of a proton gradient across the membrane. The polypeptide is ATP synthase epsilon chain 2 (Burkholderia orbicola (strain AU 1054)).